Here is a 635-residue protein sequence, read N- to C-terminus: UvrABC system protein C (635 aa).

A compositionally biased stretch (polar residues) spans 1–14; sequence MAQNHMSETMNDIS. A disordered region spans residues 1-27; sequence MAQNHMSETMNDISAESPDQPEPPRTG. Residues 40 to 117 form the GIY-YIG domain; it reads SSPGVYRMLD…IKQLKPKYNV (78 aa). The UVR domain occupies 227–262; that stretch reads TKIQEELGAEMQAASEAMEYERAAALRDRIKALTQV.

It belongs to the UvrC family. Interacts with UvrB in an incision complex.

It localises to the cytoplasm. Its function is as follows. The UvrABC repair system catalyzes the recognition and processing of DNA lesions. UvrC both incises the 5' and 3' sides of the lesion. The N-terminal half is responsible for the 3' incision and the C-terminal half is responsible for the 5' incision. In Ruegeria sp. (strain TM1040) (Silicibacter sp.), this protein is UvrABC system protein C.